The following is a 238-amino-acid chain: tRNA (guanine-N(7)-)-methyltransferase (238 aa).

The S-adenosyl-L-methionine site is built by Glu-68, Glu-93, Asp-121, and Asp-143. Asp-143 is an active-site residue. Substrate-binding positions include Lys-147, Asp-179, and 216–219 (TRYE).

Belongs to the class I-like SAM-binding methyltransferase superfamily. TrmB family.

It carries out the reaction guanosine(46) in tRNA + S-adenosyl-L-methionine = N(7)-methylguanosine(46) in tRNA + S-adenosyl-L-homocysteine. It functions in the pathway tRNA modification; N(7)-methylguanine-tRNA biosynthesis. In terms of biological role, catalyzes the formation of N(7)-methylguanine at position 46 (m7G46) in tRNA. The chain is tRNA (guanine-N(7)-)-methyltransferase from Paramagnetospirillum magneticum (strain ATCC 700264 / AMB-1) (Magnetospirillum magneticum).